The chain runs to 414 residues: MEFEIHLPKEPLLVAVSGGCDSMVLAHLLYEANHDLMIVHVHHGLRKESDEEAEAVRAWAEARRVGIRMTRLEWEGQAPSQAACRTRRYAFFQEVMAETGRRHLVLAHHRDDQLETLLIQLIRGEAGVDGIPRIRSFATGQIHRPLLPYSKQQLYDYAKARQVVWHEDETNAGTKYLRNQMRHRLLPLLAELRPGYEEATVQAAMVRYEQKQEHLKYVTSYVKEQMTDRGLPLEAIQKLPTDFRRLVLRALLPDHDFTSEDYNRFLTLLRVDMPSGEVYYGNWRIQRTYGYVTCVRCPEKNLLPEALEVGIDLGTYHYGEQTITFSRTTTGIPFSAVQFPLTIRSVLPGDRIRLAVGTKKVSRILVDAKVPRASRAEIPVVVDAAGQVLAVIGHRIAIFGSFELLAESCLMIEW.

S17–S22 contacts ATP.

Belongs to the tRNA(Ile)-lysidine synthase family.

Its subcellular location is the cytoplasm. The catalysed reaction is cytidine(34) in tRNA(Ile2) + L-lysine + ATP = lysidine(34) in tRNA(Ile2) + AMP + diphosphate + H(+). Functionally, ligates lysine onto the cytidine present at position 34 of the AUA codon-specific tRNA(Ile) that contains the anticodon CAU, in an ATP-dependent manner. Cytidine is converted to lysidine, thus changing the amino acid specificity of the tRNA from methionine to isoleucine. The polypeptide is tRNA(Ile)-lysidine synthase (Exiguobacterium sibiricum (strain DSM 17290 / CCUG 55495 / CIP 109462 / JCM 13490 / 255-15)).